The following is a 449-amino-acid chain: Glutamyl-tRNA reductase (449 aa).

Residues 58–61 (TCNR), serine 121, 126–128 (ETQ), and glutamine 132 each bind substrate. Cysteine 59 functions as the Nucleophile in the catalytic mechanism. 203 to 208 (GLGEMA) is an NADP(+) binding site.

Belongs to the glutamyl-tRNA reductase family. In terms of assembly, homodimer.

The enzyme catalyses (S)-4-amino-5-oxopentanoate + tRNA(Glu) + NADP(+) = L-glutamyl-tRNA(Glu) + NADPH + H(+). Its pathway is porphyrin-containing compound metabolism; protoporphyrin-IX biosynthesis; 5-aminolevulinate from L-glutamyl-tRNA(Glu): step 1/2. Catalyzes the NADPH-dependent reduction of glutamyl-tRNA(Glu) to glutamate 1-semialdehyde (GSA). The protein is Glutamyl-tRNA reductase of Helicobacter pylori (strain HPAG1).